The following is a 252-amino-acid chain: 3-dehydroquinate dehydratase (252 aa).

3-dehydroquinate-binding positions include S21, 46–48 (EWR), and R82. The active-site Proton donor/acceptor is H143. K170 acts as the Schiff-base intermediate with substrate in catalysis. 3-dehydroquinate-binding residues include R213, S232, and Q236.

It belongs to the type-I 3-dehydroquinase family. Homodimer.

It catalyses the reaction 3-dehydroquinate = 3-dehydroshikimate + H2O. It functions in the pathway metabolic intermediate biosynthesis; chorismate biosynthesis; chorismate from D-erythrose 4-phosphate and phosphoenolpyruvate: step 3/7. Its function is as follows. Involved in the third step of the chorismate pathway, which leads to the biosynthesis of aromatic amino acids. Catalyzes the cis-dehydration of 3-dehydroquinate (DHQ) and introduces the first double bond of the aromatic ring to yield 3-dehydroshikimate. The polypeptide is 3-dehydroquinate dehydratase (Shigella dysenteriae).